A 359-amino-acid polypeptide reads, in one-letter code: tRNA-specific 2-thiouridylase MnmA (359 aa).

ATP-binding positions include 6 to 13 (AMSGGVDS) and Leu32. Catalysis depends on Cys101, which acts as the Nucleophile. The cysteines at positions 101 and 193 are disulfide-linked. Gly125 contributes to the ATP binding site. An interaction with tRNA region spans residues 143 to 145 (KDQ). Residue Cys193 is the Cysteine persulfide intermediate of the active site.

This sequence belongs to the MnmA/TRMU family.

The protein localises to the cytoplasm. It catalyses the reaction S-sulfanyl-L-cysteinyl-[protein] + uridine(34) in tRNA + AH2 + ATP = 2-thiouridine(34) in tRNA + L-cysteinyl-[protein] + A + AMP + diphosphate + H(+). In terms of biological role, catalyzes the 2-thiolation of uridine at the wobble position (U34) of tRNA, leading to the formation of s(2)U34. This Mycobacterium sp. (strain KMS) protein is tRNA-specific 2-thiouridylase MnmA.